A 519-amino-acid chain; its full sequence is Histidine--tRNA ligase, cytoplasmic (519 aa).

L-histidine is bound by residues 135–137 (DLT), Arg-162, Gln-178, Asp-182, Arg-331, and 335–336 (YY).

This sequence belongs to the class-II aminoacyl-tRNA synthetase family. Homodimer.

It localises to the cytoplasm. The catalysed reaction is tRNA(His) + L-histidine + ATP = L-histidyl-tRNA(His) + AMP + diphosphate + H(+). In terms of biological role, catalyzes the ATP-dependent ligation of histidine to the 3'-end of its cognate tRNA, via the formation of an aminoacyl-adenylate intermediate (His-AMP). Plays a role in axon guidance. The protein is Histidine--tRNA ligase, cytoplasmic (hars1) of Takifugu rubripes (Japanese pufferfish).